Reading from the N-terminus, the 417-residue chain is Snake venom metalloproteinase acutolysin-C (417 aa).

The first 20 residues, 1 to 20, serve as a signal peptide directing secretion; it reads MIQVLLVTICLAALPYQGSS. A propeptide spans 21–189 (activation peptide); sequence IMLESGKVND…KRPSRLNLTP (169 aa). The Peptidase M12B domain maps to 197–392; that stretch reads TSVNLQLIVD…KKPKCIHKKS (196 aa). 3 cysteine pairs are disulfide-bonded: Cys308–Cys387, Cys349–Cys371, and Cys351–Cys354. Position 333 (His333) interacts with Zn(2+). Residue Glu334 is part of the active site. Positions 337 and 343 each coordinate Zn(2+). Positions 393-417 are excised as a propeptide; it reads LKTDTVSTSVSGNEPLDDNVDGFHA. The tract at residues 398–417 is disordered; that stretch reads VSTSVSGNEPLDDNVDGFHA. The span at 407–417 shows a compositional bias: acidic residues; it reads PLDDNVDGFHA.

The protein belongs to the venom metalloproteinase (M12B) family. P-I subfamily. Monomer. The cofactor is Zn(2+). As to expression, expressed by the venom gland.

The protein localises to the secreted. This protein is an alkaline zinc metalloprotease from snake venom that possesses weak hemorrhagic activity. In Deinagkistrodon acutus (Hundred-pace snake), this protein is Snake venom metalloproteinase acutolysin-C.